The following is a 670-amino-acid chain: Leucine zipper putative tumor suppressor 2 (670 aa).

Disordered regions lie at residues 1 to 52 (MAIV…GVPG), 92 to 131 (NEDF…IPVS), and 150 to 323 (PVLP…PSDE). Residues 1–333 (MAIVQTLPVP…ALLHCVLEGK (333 aa)) form a required for centrosomal localization region. Residues 187-199 (ASSSSSSSSSSAA) show a composition bias toward low complexity. The span at 213–233 (PSGTLSDSGRNSLSSLPTYST) shows a compositional bias: polar residues. 2 stretches are compositionally biased toward low complexity: residues 242–251 (SPGGHLPSHG) and 260–310 (PARG…GGDR). Phosphoserine is present on residues Ser249 and Ser296. Pro residues predominate over residues 311–321 (SPPPPPPPPPS). Residues 329-650 (VLEGKLRDRE…LELEARELAD (322 aa)) are a coiled coil. The interval 448 to 670 (SGEISLLKQQ…CLEEITATEI (223 aa)) is sufficient for interaction with CTNNB1. A sufficient for interaction with KATNB1 and for inhibition of katanin-mediated microtubule severing region spans residues 451–670 (ISLLKQQLKE…CLEEITATEI (220 aa)). Ser571 carries the phosphoserine modification. Residues 632–641 (LEQELQQLSL) carry the Nuclear export signal motif.

It belongs to the LZTS2 family. Interacts with CTNNB1. Interacts with KATNB1. Also interacts with gamma-tubulin and KIF23.

It localises to the cytoplasm. The protein resides in the cytoskeleton. Its subcellular location is the microtubule organizing center. It is found in the centrosome. Functionally, negative regulator of katanin-mediated microtubule severing and release from the centrosome. Required for central spindle formation and the completion of cytokinesis. May negatively regulate axonal outgrowth by preventing the formation of microtubule bundles that are necessary for transport within the elongating axon. Negative regulator of the Wnt signaling pathway. Represses beta-catenin-mediated transcriptional activation by promoting the nuclear exclusion of beta-catenin. The protein is Leucine zipper putative tumor suppressor 2 (Lzts2) of Rattus norvegicus (Rat).